The following is a 236-amino-acid chain: MATGKSCSRWFAPLAALLMVVSLSGCFDKEGDQRKAFIDFLQNTVMRSGERLPTLTADQKKQFGPFVSDYAILYGYSQQVNQAMDSGLRPVVDSVNAIRVPQDYVTQSGPLREMNGSLGVLAQQLQNAKLQADAAHSALKQSDDLKPVFDQAFTKVVTTPADALQPLIPAAQTFTQQLVMVGDYIAQQGTQVSFVANGIQFPTSQQASEYNKLIAPLPAQHQAFNQAWTTAVTATQ.

This is an uncharacterized protein from Escherichia coli O157:H7.